A 218-amino-acid chain; its full sequence is uncharacterized protein (218 aa).

This sequence belongs to the HAD-like hydrolase superfamily.

The protein resides in the cytoplasm. It localises to the nucleus. This is an uncharacterized protein from Saccharomyces cerevisiae (strain ATCC 204508 / S288c) (Baker's yeast).